A 333-amino-acid chain; its full sequence is HTH-type transcriptional repressor PurR (333 aa).

Residues 2 to 56 (ATIKDVAKMAGVSTTTVSHVINKTRFVAKETEQQVLQAIKNLNYSPSAVARSLKV) enclose the HTH lacI-type domain. The segment at residues 4-23 (IKDVAKMAGVSTTTVSHVIN) is a DNA-binding region (H-T-H motif). The DNA-binding element occupies 48 to 56 (SAVARSLKV). Hypoxanthine-binding residues include tyrosine 73, lysine 189, threonine 191, phenylalanine 220, and aspartate 274.

As to quaternary structure, homodimer.

It participates in purine metabolism; purine nucleotide biosynthesis [regulation]. Is the main repressor of the genes involved in the de novo synthesis of purine nucleotides, regulating purB, purC, purEK, purF, purHD, purL, purMN and guaBA expression. PurR is allosterically activated to bind its cognate DNA by binding the purine corepressors, hypoxanthine or guanine, thereby effecting transcription repression. The chain is HTH-type transcriptional repressor PurR from Histophilus somni (strain 129Pt) (Haemophilus somnus).